Reading from the N-terminus, the 293-residue chain is ATP synthase gamma chain (293 aa).

Belongs to the ATPase gamma chain family. F-type ATPases have 2 components, CF(1) - the catalytic core - and CF(0) - the membrane proton channel. CF(1) has five subunits: alpha(3), beta(3), gamma(1), delta(1), epsilon(1). CF(0) has three main subunits: a, b and c.

Its subcellular location is the cell inner membrane. In terms of biological role, produces ATP from ADP in the presence of a proton gradient across the membrane. The gamma chain is believed to be important in regulating ATPase activity and the flow of protons through the CF(0) complex. The sequence is that of ATP synthase gamma chain from Sinorhizobium fredii (strain NBRC 101917 / NGR234).